The sequence spans 110 residues: Inner kinetochore subunit mhf1 (110 aa).

It belongs to the TAF9 family. CENP-S/MHF1 subfamily. In terms of assembly, the MHF histone-fold complex is a heterotetramer of 2 mhf1-mhf2 heterodimers. Component of the inner kinetochore constitutive centromere-associated network (CCAN) (also known as central kinetochore Sim4 complex in fission yeast), which is composed of at least cnl2, cnp3, cnp20, fta1, fta2, fta3, fta4, fta6, fta7, mal2, mhf1, mhf2, mis6, mis15, mis17, sim4 and wip1.

Its subcellular location is the nucleus. Functionally, component of a FANCM-MHF complex that promotes gene conversion at blocked replication forks, probably by reversal of the stalled fork. FANCM-MHF promotes non-crossover recombination. The polypeptide is Inner kinetochore subunit mhf1 (Schizosaccharomyces pombe (strain 972 / ATCC 24843) (Fission yeast)).